A 232-amino-acid chain; its full sequence is Noggin (232 aa).

Residues 1–27 (MERCPSLGVTLYALVVVLGLRATPAGG) form the signal peptide. N62 is a glycosylation site (N-linked (GlcNAc...) asparagine). The segment at 77-96 (GFMATSPPEDRPGGGGGAAG) is disordered. 4 cysteine pairs are disulfide-bonded: C155–C192, C178–C228, C184–C230, and C207–C215.

The protein belongs to the noggin family. Homodimer. Interacts with GDF5; inhibits chondrocyte differentiation.

It is found in the secreted. Its function is as follows. Inhibitor of bone morphogenetic proteins (BMP) signaling which is required for growth and patterning of the neural tube and somite. Essential for cartilage morphogenesis and joint formation. Inhibits chondrocyte differentiation through its interaction with GDF5 and, probably, GDF6. This chain is Noggin (NOG), found in Homo sapiens (Human).